The sequence spans 568 residues: MSVSVFNRCWSKVILETLVRQGVSHVCIAPGSRSTPLTLEAVRLQNAGSVTCYTHFDERGLGFFALGIAKATQSPVAIIVTSGTATANLYPAIIEARQTGVNLFVLTADRPPELWECGANQAILQQNMFGQYPVANVNLPKPKADYSAQWLISLLEQAAFQQKQQGGVVHINVPFSEPLYDATDEAVDSHSWLQPLQRWLIQTKPWMNVEAQQNEVLMHENWDHWRTKRGVVVVGQLPAEQAMGINSWASAMGWVLLTDIQSGVVPTTPYEDIWLANQTVREKLLQADIVIQFGARFISKRINQFLQAFKGEFWLVEQSGKALDPYHHSLTRFNAKAHHWLRAHPPLRQKPWLLEPLALSKFCATFIEQQVGGNLTEASFALRLPTLLPYNGVLFLGNSLLVRLVDALTQLPESYPVYTNRGASGIDGLLATAAGIGIGSNKPVVAVIGDTSTLYDLNSFALFKNVTQPTVIFVINNNGGAIFDMLPVDEQVKDQFYRLPHNGDFSQIAAMFDLKYAHPYTWADLNSVVKQAYSRRKATLIEIKTNPSDGSSLYKRLIEQISHAVIGA.

It belongs to the TPP enzyme family. MenD subfamily. Homodimer. Mg(2+) is required as a cofactor. Mn(2+) serves as cofactor. Requires thiamine diphosphate as cofactor.

The enzyme catalyses isochorismate + 2-oxoglutarate + H(+) = 5-enolpyruvoyl-6-hydroxy-2-succinyl-cyclohex-3-ene-1-carboxylate + CO2. It participates in quinol/quinone metabolism; 1,4-dihydroxy-2-naphthoate biosynthesis; 1,4-dihydroxy-2-naphthoate from chorismate: step 2/7. The protein operates within quinol/quinone metabolism; menaquinone biosynthesis. In terms of biological role, catalyzes the thiamine diphosphate-dependent decarboxylation of 2-oxoglutarate and the subsequent addition of the resulting succinic semialdehyde-thiamine pyrophosphate anion to isochorismate to yield 2-succinyl-5-enolpyruvyl-6-hydroxy-3-cyclohexene-1-carboxylate (SEPHCHC). The protein is 2-succinyl-5-enolpyruvyl-6-hydroxy-3-cyclohexene-1-carboxylate synthase of Haemophilus influenzae (strain PittEE).